Reading from the N-terminus, the 396-residue chain is Interactor of constitutive active ROPs 5 (396 aa).

Disordered regions lie at residues 1-49 (MQTP…TQIP) and 99-122 (ALKREAQEEAEDAKHQLMDINASE). 2 coiled-coil regions span residues 67–124 (KKRT…SEDS) and 158–366 (LSSA…TAAS). The span at 99 to 115 (ALKREAQEEAEDAKHQL) shows a compositional bias: basic and acidic residues.

This sequence belongs to the ICR family. In terms of assembly, component of the active ARAC10-IRC5-KIN13A complex. Homooligomer. Interacts (via C-terminus) with ARAC4, ARAC10, ARAC11 and (via N-terminus) with KIN13A (via C-terminus), but no interactions with SEC3A. Expressed in xylem cells in the roots and in stamens, petals and pollen.

It localises to the cell membrane. Its subcellular location is the cytoplasm. The protein localises to the cytoskeleton. ROP effector binding specifically activated ROPs and linking them to the microtubule cytoskeleton. Involved in ROP-regulated polar growth. Involved in local disassembly of cortical microtubules when associated with ARAC10 and KIN13A and conversely also mediates the elimination of ARAC10 from the plasma membrane by the cortical microtubules. Accumulates at the plus end of shrinking microtubules. Targets KIN13A to microtubules. The chain is Interactor of constitutive active ROPs 5 (ICR5) from Arabidopsis thaliana (Mouse-ear cress).